Here is a 247-residue protein sequence, read N- to C-terminus: Probable phosphatase Shew_1420 (247 aa).

Zn(2+) is bound by residues H8, H10, H16, H41, E74, H102, H132, D193, and H195.

This sequence belongs to the PHP family. Zn(2+) serves as cofactor.

The chain is Probable phosphatase Shew_1420 from Shewanella loihica (strain ATCC BAA-1088 / PV-4).